The chain runs to 340 residues: tRNA N6-adenosine threonylcarbamoyltransferase (340 aa).

H111 and H115 together coordinate Fe cation. Substrate is bound by residues 133–137 (VVSGG), D166, G179, D183, and N273. D301 contacts Fe cation.

The protein belongs to the KAE1 / TsaD family. Requires Fe(2+) as cofactor.

Its subcellular location is the cytoplasm. The enzyme catalyses L-threonylcarbamoyladenylate + adenosine(37) in tRNA = N(6)-L-threonylcarbamoyladenosine(37) in tRNA + AMP + H(+). Functionally, required for the formation of a threonylcarbamoyl group on adenosine at position 37 (t(6)A37) in tRNAs that read codons beginning with adenine. Is involved in the transfer of the threonylcarbamoyl moiety of threonylcarbamoyl-AMP (TC-AMP) to the N6 group of A37, together with TsaE and TsaB. TsaD likely plays a direct catalytic role in this reaction. The chain is tRNA N6-adenosine threonylcarbamoyltransferase from Pelobacter propionicus (strain DSM 2379 / NBRC 103807 / OttBd1).